A 741-amino-acid chain; its full sequence is 1,4-alpha-glucan branching enzyme GlgB (741 aa).

Asp-420 functions as the Nucleophile in the catalytic mechanism. The Proton donor role is filled by Glu-473.

Belongs to the glycosyl hydrolase 13 family. GlgB subfamily. Monomer.

It catalyses the reaction Transfers a segment of a (1-&gt;4)-alpha-D-glucan chain to a primary hydroxy group in a similar glucan chain.. It participates in glycan biosynthesis; glycogen biosynthesis. In terms of biological role, catalyzes the formation of the alpha-1,6-glucosidic linkages in glycogen by scission of a 1,4-alpha-linked oligosaccharide from growing alpha-1,4-glucan chains and the subsequent attachment of the oligosaccharide to the alpha-1,6 position. The chain is 1,4-alpha-glucan branching enzyme GlgB from Pseudomonas syringae pv. syringae (strain B728a).